A 100-amino-acid polypeptide reads, in one-letter code: Large ribosomal subunit protein uL23 (100 aa).

The protein belongs to the universal ribosomal protein uL23 family. Part of the 50S ribosomal subunit. Contacts protein L29, and trigger factor when it is bound to the ribosome.

In terms of biological role, one of the early assembly proteins it binds 23S rRNA. One of the proteins that surrounds the polypeptide exit tunnel on the outside of the ribosome. Forms the main docking site for trigger factor binding to the ribosome. The chain is Large ribosomal subunit protein uL23 from Mycobacterium tuberculosis (strain ATCC 25177 / H37Ra).